The sequence spans 361 residues: MSEIVPPEVRPKPAVPAKPSHVAPPSSAPFVPSPQGTGGEGQGSGRGSALLGYIGIDTIIEQMRKKTMKAGFDFNIMVVGQSGLGKSTLVNTLFKSQVSRRSTSWSRDEKIPKTVEIKSVSHVIEEGGVKMKLTVVDTPGFGDQINNDNCWEPISKHINEQYEKFLKEEVNIARKKRIPDTRVHCCLYFISPTGHSLRQLDIEFMKHLSRVVNIIPVIAKSDTLTPEEKTEFKQRVRKELEVCGIECYPQKEFDEDMEDKSDNDKIRETMPFAVVGSDKEYQVNGKRVLGRKTAWGVVEVENPNHCEFSLLRDFMIRSHLQDLKEVTHNIHYETYRAKRLNDNGGLHPISSSGHDTQESNL.

Positions 1 to 46 are disordered; that stretch reads MSEIVPPEVRPKPAVPAKPSHVAPPSSAPFVPSPQGTGGEGQGSGR. Positions 15–34 are enriched in low complexity; it reads VPAKPSHVAPPSSAPFVPSP. Residues 36 to 46 are compositionally biased toward gly residues; the sequence is GTGGEGQGSGR. The Septin-type G domain occupies 70 to 342; sequence AGFDFNIMVV…ETYRAKRLND (273 aa). The interval 80 to 87 is G1 motif; it reads GQSGLGKS. GTP is bound by residues 80-87 and threonine 114; that span reads GQSGLGKS. The segment at 137-140 is G3 motif; sequence DTPG. Positions 219-222 are G4 motif; that stretch reads AKSD. Residues 220–228, glycine 276, and arginine 291 contribute to the GTP site; that span reads KSDTLTPEE. Positions 341-361 are disordered; it reads NDNGGLHPISSSGHDTQESNL. Polar residues predominate over residues 349–361; the sequence is ISSSGHDTQESNL.

Belongs to the TRAFAC class TrmE-Era-EngA-EngB-Septin-like GTPase superfamily. Septin GTPase family.

It is found in the cytoplasm. Functionally, may be involved in cytokinesis. In Danio rerio (Zebrafish), this protein is Neuronal-specific septin-3.